The sequence spans 208 residues: Ribosomal RNA large subunit methyltransferase E (208 aa).

5 residues coordinate S-adenosyl-L-methionine: glycine 62, tryptophan 64, aspartate 82, aspartate 98, and aspartate 123. The Proton acceptor role is filled by lysine 163.

It belongs to the class I-like SAM-binding methyltransferase superfamily. RNA methyltransferase RlmE family.

It is found in the cytoplasm. It carries out the reaction uridine(2552) in 23S rRNA + S-adenosyl-L-methionine = 2'-O-methyluridine(2552) in 23S rRNA + S-adenosyl-L-homocysteine + H(+). Specifically methylates the uridine in position 2552 of 23S rRNA at the 2'-O position of the ribose in the fully assembled 50S ribosomal subunit. In Edwardsiella ictaluri (strain 93-146), this protein is Ribosomal RNA large subunit methyltransferase E.